The chain runs to 360 residues: Photosystem II protein D1 2 (360 aa).

3 consecutive transmembrane segments (helical) span residues 29-46 (YIGWFGVLMIPTLLAATT), 118-133 (HFLTGVFCYLGREWEL), and 142-156 (WICLAFSAPVAAATA). Residue His-118 coordinates chlorophyll a. Tyr-126 is a pheophytin a binding site. [CaMn4O5] cluster contacts are provided by Asp-170 and Glu-189. The helical transmembrane segment at 197–218 (FHMLGVAGVFGGSLFSAMHGSL) threads the bilayer. His-198 is a chlorophyll a binding site. A quinone is bound by residues His-215 and 264 to 265 (SF). His-215 is a binding site for Fe cation. His-272 serves as a coordination point for Fe cation. The chain crosses the membrane as a helical span at residues 274–288 (FLAAWPVIGIWFTAL). Residues His-332, Glu-333, Asp-342, and Ala-344 each coordinate [CaMn4O5] cluster. Positions 345–360 (AGEVAPVAISAPAING) are excised as a propeptide.

Belongs to the reaction center PufL/M/PsbA/D family. In terms of assembly, PSII is composed of 1 copy each of membrane proteins PsbA, PsbB, PsbC, PsbD, PsbE, PsbF, PsbH, PsbI, PsbJ, PsbK, PsbL, PsbM, PsbT, PsbX, PsbY, PsbZ, Psb30/Ycf12, peripheral proteins PsbO, CyanoQ (PsbQ), PsbU, PsbV and a large number of cofactors. It forms dimeric complexes. The cofactor is The D1/D2 heterodimer binds P680, chlorophylls that are the primary electron donor of PSII, and subsequent electron acceptors. It shares a non-heme iron and each subunit binds pheophytin, quinone, additional chlorophylls, carotenoids and lipids. D1 provides most of the ligands for the Mn4-Ca-O5 cluster of the oxygen-evolving complex (OEC). There is also a Cl(-1) ion associated with D1 and D2, which is required for oxygen evolution. The PSII complex binds additional chlorophylls, carotenoids and specific lipids.. Tyr-161 forms a radical intermediate that is referred to as redox-active TyrZ, YZ or Y-Z. In terms of processing, C-terminally processed by CtpA; processing is essential to allow assembly of the oxygen-evolving complex and thus photosynthetic growth.

It is found in the cellular thylakoid membrane. The enzyme catalyses 2 a plastoquinone + 4 hnu + 2 H2O = 2 a plastoquinol + O2. Photosystem II (PSII) is a light-driven water:plastoquinone oxidoreductase that uses light energy to abstract electrons from H(2)O, generating O(2) and a proton gradient subsequently used for ATP formation. It consists of a core antenna complex that captures photons, and an electron transfer chain that converts photonic excitation into a charge separation. The D1/D2 (PsbA/PsbD) reaction center heterodimer binds P680, the primary electron donor of PSII as well as several subsequent electron acceptors. This is Photosystem II protein D1 2 from Nostoc sp. (strain PCC 7120 / SAG 25.82 / UTEX 2576).